We begin with the raw amino-acid sequence, 468 residues long: Eukaryotic translation initiation factor 3 subunit M (468 aa).

The segment at 40 to 61 is disordered; that stretch reads VAPLIEPLRQQEQSEEEPDRKQ. The PCI domain occupies 206 to 377; it reads DLELAQTHVV…SEFLVHRATY (172 aa). Positions 419 to 468 are disordered; it reads QAAAEEVGQGKSGDKGAKGGDRRRNPQQQQQSQPSQPQQAREVELVGGAE. The span at 430–442 shows a compositional bias: basic and acidic residues; that stretch reads SGDKGAKGGDRRR. Residues 444 to 457 are compositionally biased toward low complexity; sequence PQQQQQSQPSQPQQ.

The protein belongs to the eIF-3 subunit M family. As to quaternary structure, component of the eukaryotic translation initiation factor 3 (eIF-3) complex.

The protein resides in the cytoplasm. Functionally, component of the eukaryotic translation initiation factor 3 (eIF-3) complex, which is involved in protein synthesis of a specialized repertoire of mRNAs and, together with other initiation factors, stimulates binding of mRNA and methionyl-tRNAi to the 40S ribosome. The eIF-3 complex specifically targets and initiates translation of a subset of mRNAs involved in cell proliferation. This chain is Eukaryotic translation initiation factor 3 subunit M, found in Aspergillus fumigatus (strain CBS 144.89 / FGSC A1163 / CEA10) (Neosartorya fumigata).